An 880-amino-acid polypeptide reads, in one-letter code: MATSNDIRATFLNYFARNGHEVVDSSPLVPRNDPTLLFVNSGMVQFKNVFTGQERRPYSRATTSQKCVRAGGKHNDLDNVGYTARHHTFFEMLGNFSFGDYFKEQAITHAWNVVTREFGLPAEKLLVTVYQDDDDAARLWKSIAGLPEERIIRIASSDNFWRMGDTGPCGPCSEIFYDHGPSIPGGPPGSPDEDGDRFIEIWNLVFMQYEEGPPGTRVNLPRPSIDTGMGLERLAAVLQGKHDNYDTDTLRALIVASAEATGQDPDGPHKTSHRVVADHLRSTSFLMADGVLPSNEGRGYVLRRIMRRAMRHAHLMGMTEPLLYRLVPALVRQMGAAYGELVQAQSLITETLRLEETRFKAMLDRGLAMLSDEVGKLGEGQTLSGDVAFKLYDTYGFPLDLTQDALREQGRAVDVAGFDAAMTEQRRRARAAWSGSGDAAQEGVWFEIRDRVGGTEFLGYSTEKAEAEIIALVANGALTETAPAGTEVAVVLNQTPFYGESGGQVGDTGIITGPNGLRIIISDTQKKLGDVFVHLGRVESGLAQIGQPVEVVVDHQRRSAIRAHHSATHLLHEALRRRLGTHVAQKGSLNAPDRLRFDVSQPTPITRDDLAVVEAEVNALIRQNSPVNTRLMTPEQAVAEGAMALFGEKYGDEVRVVSMGAPVEEGKPAYSIELCGGTHVGRTGDIGLFRITGESAVSAGVRRIEAVTGEAALAQIAEAERRLQETASLLRVAPGDVTTRVASLLEERKKLEAQLADAQRKLATGGAADKVEEVGGVKLAARNLGDVAPKELKGLAEAIARQLESGVVALVSTAEGKASVVVGVTADLTSRFDAVTLVRAASAAVGGKGGGGRPDMAQAGGPDAAQADAALQAVRDAMAA.

Zn(2+) contacts are provided by histidine 565, histidine 569, cysteine 675, and histidine 679.

This sequence belongs to the class-II aminoacyl-tRNA synthetase family. Requires Zn(2+) as cofactor.

It is found in the cytoplasm. It carries out the reaction tRNA(Ala) + L-alanine + ATP = L-alanyl-tRNA(Ala) + AMP + diphosphate. In terms of biological role, catalyzes the attachment of alanine to tRNA(Ala) in a two-step reaction: alanine is first activated by ATP to form Ala-AMP and then transferred to the acceptor end of tRNA(Ala). Also edits incorrectly charged Ser-tRNA(Ala) and Gly-tRNA(Ala) via its editing domain. This chain is Alanine--tRNA ligase, found in Granulibacter bethesdensis (strain ATCC BAA-1260 / CGDNIH1).